The primary structure comprises 67 residues: UPF0253 protein VV2574 (67 aa).

Belongs to the UPF0253 family.

This chain is UPF0253 protein VV2574, found in Vibrio vulnificus (strain YJ016).